Reading from the N-terminus, the 581-residue chain is Pre-mRNA 3'-end-processing factor FIP1 (581 aa).

2 stretches are compositionally biased toward basic and acidic residues: residues 1 to 10 and 32 to 42; these read MSAGEVERLV and VHVHSDLAKDL. Disordered regions lie at residues 1-95, 211-282, and 320-581; these read MSAG…EDDV, TVQQ…ESPD, and RSAT…APAE. The tract at residues 1 to 110 is sufficient for interaction with PAPOLA; that stretch reads MSAGEVERLV…DIKTGAPQYG (110 aa). The tract at residues 1–332 is necessary for stimulating PAPOLA activity; the sequence is MSAGEVERLV…TEVDNNFSKP (332 aa). 2 stretches are compositionally biased toward acidic residues: residues 43-54 and 80-94; these read DENEVERPEEEN and TEDDSDSDSDDDEDD. Phosphoserine is present on residues Ser84, Ser86, and Ser88. The tract at residues 136 to 219 is sufficient for interaction with CPSF4; sequence KGVDLDAPGS…ITVQQGRTGN (84 aa). Positions 247–267 are enriched in low complexity; the sequence is SRNSTSSQSQTSTASRKASSS. Over residues 271 to 282 the composition is skewed to basic and acidic residues; that stretch reads WQDRYGRAESPD. A Phosphoserine modification is found at Ser280. Polar residues predominate over residues 320–330; sequence RSATEVDNNFS. Pro residues predominate over residues 331–389; that stretch reads KPPPFFPPGAPPTHLPPPPFLPPPPTVSTAPPLIPPPGIPITVPPPGFPPPPGAPPPSL. The residue at position 411 (Tyr411) is a Phosphotyrosine. Over residues 419 to 435 the composition is skewed to polar residues; it reads LTSSAPSWPSLVDTTKQ. Positions 428–581 are sufficient for interaction with CPSF1 and CSTF3; that stretch reads SLVDTTKQWD…QESTEAAPAE (154 aa). The segment covering 439–479 has biased composition (basic and acidic residues); that stretch reads YARREKDRDRDRERDRDRERERDRDRERERTRERERERDHS. The segment at 442 to 477 is arg/Asp/Glu-rich domain; that stretch reads REKDRDRDRERDRDRERERDRDRERERTRERERERD. The tract at residues 478–535 is sufficient for interaction with AHCYL1; that stretch reads HSPTPSVFNSDEERYRYREYAERGYERHRASREKEERHRERRHREKEETRHKSSRSNS. Ser479 is modified (phosphoserine). Thr481 is modified (phosphothreonine). Ser483 and Ser487 each carry phosphoserine. Positions 488–515 are enriched in basic and acidic residues; sequence DEERYRYREYAERGYERHRASREKEERH. A compositionally biased stretch (basic residues) spans 529 to 538; sequence KSSRSNSRRR. A Phosphoserine modification is found at Ser541. Residues 547-557 show a composition bias toward basic residues; sequence HRRHKHKKSKR.

Belongs to the FIP1 family. As to quaternary structure, component of the cleavage and polyadenylation specificity factor (CPSF) complex, composed of CPSF1, CPSF2, CPSF3, CPSF4 and FIP1L1. Found in a complex with CPSF1, FIP1L1 and PAPOLA. Interacts with CPSF1, CPSF4, CSTF2 and CSTF3. Interacts with AHCYL1 (when phosphorylated); the interaction is direct and associates AHCYL1 with the CPSF complex and RNA. Interacts with PAPOLA; the interaction seems to be increased by the interaction with AHCYL1. Interacts with NUDT21/CPSF5; this interaction occurs in a RNA sequence-specific manner. Interacts (preferentially via unphosphorylated form and Arg/Glu/Asp-rich domain) with CPSF6 (via Arg/Ser-rich domain); this interaction mediates, at least in part, the interaction between the CFIm and CPSF complexes and may be inhibited by CPSF6 hyper-phosphorylation. Interacts (preferentially via unphosphorylated form and Arg/Asp/Glu-rich domain) with CPSF7 (via Arg/Ser-rich domain); this interaction mediates, at least in part, the interaction between the CFIm and CPSF complexes and may be inhibited by CPSF7 hyper-phosphorylation.

It is found in the nucleus. Functionally, component of the cleavage and polyadenylation specificity factor (CPSF) complex that plays a key role in pre-mRNA 3'-end formation, recognizing the AAUAAA signal sequence and interacting with poly(A) polymerase and other factors to bring about cleavage and poly(A) addition. FIP1L1 contributes to poly(A) site recognition and stimulates poly(A) addition. Binds to U-rich RNA sequence elements surrounding the poly(A) site. May act to tether poly(A) polymerase to the CPSF complex. The chain is Pre-mRNA 3'-end-processing factor FIP1 (Fip1l1) from Mus musculus (Mouse).